The chain runs to 732 residues: 1,4-alpha-glucan branching enzyme GlgB (732 aa).

Residue Asp-412 is the Nucleophile of the active site. Residue Glu-465 is the Proton donor of the active site.

This sequence belongs to the glycosyl hydrolase 13 family. GlgB subfamily. As to quaternary structure, monomer.

The catalysed reaction is Transfers a segment of a (1-&gt;4)-alpha-D-glucan chain to a primary hydroxy group in a similar glucan chain.. The protein operates within glycan biosynthesis; glycogen biosynthesis. In terms of biological role, catalyzes the formation of the alpha-1,6-glucosidic linkages in glycogen by scission of a 1,4-alpha-linked oligosaccharide from growing alpha-1,4-glucan chains and the subsequent attachment of the oligosaccharide to the alpha-1,6 position. This Pseudomonas aeruginosa (strain ATCC 15692 / DSM 22644 / CIP 104116 / JCM 14847 / LMG 12228 / 1C / PRS 101 / PAO1) protein is 1,4-alpha-glucan branching enzyme GlgB.